The sequence spans 376 residues: MPISRRVLTPITAAPVILAVLCFFFWSSIIGPDNLKGTKHVLQDAKTIPLPVDGPESLEFDPQGEGPYVGVTDGRILKWRGEELGWVDFAYTSPHRDNCSSHEVVPSCGRPLGLSFERKTGDLYICDGYFGVMKVGPEGGLAELVVDEAEGRKVMFANQGDIDEEEDIFYFNDSSDTYHFRDVFYVSLSGTKVGRVIRYDMKKKEAKVIMDKLRLPNGLALSKNGSFVVTCESSTNICHRIWVKGPKSGTNEVFATLPGSPDNIRRTPTGDFWVALHCKKNLFTRAVLIHTWVGRFFMNTMKMETVIHFMNGGKPHGIVVKLSGETGEILEILEDSEGKTVKYVSEAYETKDGKLWIGSVYWPAVWVLDTSVYDSI.

A signal peptide spans M1 to G31. N-linked (GlcNAc...) asparagine glycans are attached at residues N98, N172, and N224.

It belongs to the strictosidine synthase family.

The protein localises to the vacuole. The sequence is that of Protein STRICTOSIDINE SYNTHASE-LIKE 8 from Arabidopsis thaliana (Mouse-ear cress).